Here is a 499-residue protein sequence, read N- to C-terminus: Pyruvate kinase 2 (499 aa).

Position 50 (arginine 50) interacts with substrate. Asparagine 52, serine 54, aspartate 84, and threonine 85 together coordinate K(+). Residue 52-55 participates in ATP binding; sequence NFSH. Position 91 (arginine 91) interacts with ATP. Glutamate 241 contacts Mg(2+). Substrate is bound by residues glycine 264, aspartate 265, and threonine 297. Aspartate 265 serves as a coordination point for Mg(2+).

Belongs to the pyruvate kinase family. In terms of assembly, homotetramer. Requires Mg(2+) as cofactor. The cofactor is K(+).

It catalyses the reaction pyruvate + ATP = phosphoenolpyruvate + ADP + H(+). It participates in carbohydrate degradation; glycolysis; pyruvate from D-glyceraldehyde 3-phosphate: step 5/5. With respect to regulation, activated by fructose 2,6-bisphosphate, activated by the effector in a cooperative manner. The polypeptide is Pyruvate kinase 2 (PYK2) (Trypanosoma brucei brucei).